The primary structure comprises 252 residues: Transmembrane ascorbate-dependent reductase CYB561 (252 aa).

Methionine 1 carries the N-acetylmethionine modification. Residues methionine 1 to tyrosine 17 are Cytoplasmic-facing. The chain crosses the membrane as a helical span at residues valine 18–methionine 38. A Cytochrome b561 domain is found at phenylalanine 20 to threonine 221. Residues tyrosine 39 to asparagine 52 lie on the Vesicular side of the membrane. The chain crosses the membrane as a helical span at residues valine 53–tyrosine 73. Heme b contacts are provided by histidine 54, arginine 74, and lysine 81. The Cytoplasmic segment spans residues arginine 74–valine 86. The L-ascorbate site is built by lysine 81 and lysine 85. The chain crosses the membrane as a helical span at residues leucine 87–phenylalanine 107. Residues histidine 88, aspartate 117 to serine 120, and histidine 122 contribute to the heme b site. At glutamate 108–cysteine 125 the chain is on the vesicular side. The helical transmembrane segment at glycine 126–phenylalanine 146 threads the bilayer. Over proline 147–proline 159 the chain is Cytoplasmic. Arginine 154 serves as a coordination point for L-ascorbate. A helical transmembrane segment spans residues glutamine 160 to leucine 180. Histidine 161 and glutamate 182 together coordinate heme b. Topologically, residues lysine 181–glycine 199 are vesicular. A helical transmembrane segment spans residues valine 200–leucine 220. Topologically, residues threonine 221–glutamine 252 are cytoplasmic. Lysine 226 is a binding site for heme b. 2 positions are modified to phosphoserine: serine 248 and serine 250.

It depends on heme b as a cofactor.

Its subcellular location is the cytoplasmic vesicle. The protein resides in the secretory vesicle. It is found in the chromaffin granule membrane. It catalyses the reaction monodehydro-L-ascorbate radical(out) + L-ascorbate(in) = monodehydro-L-ascorbate radical(in) + L-ascorbate(out). Functionally, transmembrane reductase that uses ascorbate as an electron donor in the cytoplasm and transfers electrons across membranes to reduce monodehydro-L-ascorbate radical in the lumen of secretory vesicles. It is therefore involved the regeneration and homeostasis within secretory vesicles of ascorbate which in turn provides reducing equivalents needed to support the activity of intravesicular enzymes. This chain is Transmembrane ascorbate-dependent reductase CYB561 (CYB561), found in Ovis aries (Sheep).